A 347-amino-acid chain; its full sequence is Protein RecA (347 aa).

An ATP-binding site is contributed by 64–71 (GPESSGKT).

The protein belongs to the RecA family.

Its subcellular location is the cytoplasm. Functionally, can catalyze the hydrolysis of ATP in the presence of single-stranded DNA, the ATP-dependent uptake of single-stranded DNA by duplex DNA, and the ATP-dependent hybridization of homologous single-stranded DNAs. It interacts with LexA causing its activation and leading to its autocatalytic cleavage. The protein is Protein RecA of Bartonella quintana (strain Toulouse) (Rochalimaea quintana).